The chain runs to 238 residues: 7-cyano-7-deazaguanine synthase (238 aa).

ATP is bound at residue 14 to 24 (FSGGQDSATCL). Residues Cys202, Cys217, Cys220, and Cys223 each contribute to the Zn(2+) site.

Belongs to the QueC family. Zn(2+) serves as cofactor.

It catalyses the reaction 7-carboxy-7-deazaguanine + NH4(+) + ATP = 7-cyano-7-deazaguanine + ADP + phosphate + H2O + H(+). It participates in purine metabolism; 7-cyano-7-deazaguanine biosynthesis. In terms of biological role, catalyzes the ATP-dependent conversion of 7-carboxy-7-deazaguanine (CDG) to 7-cyano-7-deazaguanine (preQ(0)). The polypeptide is 7-cyano-7-deazaguanine synthase (Nitrobacter hamburgensis (strain DSM 10229 / NCIMB 13809 / X14)).